A 218-amino-acid polypeptide reads, in one-letter code: Probable GTP-binding protein EngB (218 aa).

The EngB-type G domain occupies Asn-21 to Pro-192. Residues Gly-29–Ser-36, Gly-56–Ser-60, Asp-75–Gly-78, Thr-142–Asp-145, and Phe-171–Ser-173 each bind GTP. 2 residues coordinate Mg(2+): Ser-36 and Thr-58. A disordered region spans residues Met-194 to Glu-218.

Belongs to the TRAFAC class TrmE-Era-EngA-EngB-Septin-like GTPase superfamily. EngB GTPase family. Requires Mg(2+) as cofactor.

Functionally, necessary for normal cell division and for the maintenance of normal septation. This chain is Probable GTP-binding protein EngB, found in Oleidesulfovibrio alaskensis (strain ATCC BAA-1058 / DSM 17464 / G20) (Desulfovibrio alaskensis).